The primary structure comprises 562 residues: Sulfite reductase [NADPH] hemoprotein beta-component (562 aa).

[4Fe-4S] cluster-binding residues include Cys-425, Cys-431, Cys-470, and Cys-474. Cys-474 contributes to the siroheme binding site.

It belongs to the nitrite and sulfite reductase 4Fe-4S domain family. As to quaternary structure, alpha(8)-beta(8). The alpha component is a flavoprotein, the beta component is a hemoprotein. Requires siroheme as cofactor. The cofactor is [4Fe-4S] cluster.

It carries out the reaction hydrogen sulfide + 3 NADP(+) + 3 H2O = sulfite + 3 NADPH + 4 H(+). It functions in the pathway sulfur metabolism; hydrogen sulfide biosynthesis; hydrogen sulfide from sulfite (NADPH route): step 1/1. Component of the sulfite reductase complex that catalyzes the 6-electron reduction of sulfite to sulfide. This is one of several activities required for the biosynthesis of L-cysteine from sulfate. The chain is Sulfite reductase [NADPH] hemoprotein beta-component from Tolumonas auensis (strain DSM 9187 / NBRC 110442 / TA 4).